Reading from the N-terminus, the 378-residue chain is Probable cytochrome oxidase subunit 2 (378 aa).

Over 1 to 8 (MIDYEFLR) the chain is Cytoplasmic. Residues 9–28 (FIWWVLVIVLLIGFSVTDGF) traverse the membrane as a helical segment. The Periplasmic portion of the chain corresponds to 29–79 (DMGVTALLPVIGKKEVERRIMINTIAPHWDGNQVWLLTAGGAIFAAWPIVY). Residues 80–99 (AVSFSGFYIALVLVLAALFL) traverse the membrane as a helical segment. The Cytoplasmic portion of the chain corresponds to 100–122 (RPLGFEYRAKIDNPTWRSVWDWG). A helical membrane pass occupies residues 123-142 (LFAGGFVPALVFGVAFGNLL). Residues 143–164 (QGVPFHFNELTQVTYTGSFFEL) lie on the Periplasmic side of the membrane. The helical transmembrane segment at 165 to 184 (LNPFALLCGVISLSMLVTHG) threads the bilayer. The Cytoplasmic portion of the chain corresponds to 185-205 (ANWLQMKTTEALRDRARTVSQ). Residues 206–224 (IGSIVTLIAFVLAGVWLYS) form a helical membrane-spanning segment. Residues 225 to 261 (KDGYVVTSTIDHFAPSSPMNKEVAVETGAWFRNFNEM) lie on the Periplasmic side of the membrane. Residues 262-281 (PILWIFPALAVVAALLNAAF) traverse the membrane as a helical segment. The Cytoplasmic portion of the chain corresponds to 282–291 (SKANRCGFAF). A helical transmembrane segment spans residues 292-311 (FFSALTMAGVIITAAVSMFP). The Periplasmic segment spans residues 312 to 335 (FVMPSSSHPEQSLLMWDSTSSELT). Residues 336–355 (LTLMLIFAVVFVVIALAYTI) traverse the membrane as a helical segment. Over 356–378 (WSYSKMFGRLDANFIDKNKHSLY) the chain is Cytoplasmic.

Belongs to the cytochrome ubiquinol oxidase subunit 2 family. Heterodimer of subunits I and II.

The protein localises to the cell inner membrane. In terms of biological role, probable cytochrome oxidase subunit. The sequence is that of Probable cytochrome oxidase subunit 2 from Haemophilus influenzae (strain ATCC 51907 / DSM 11121 / KW20 / Rd).